Consider the following 98-residue polypeptide: NADH-ubiquinone oxidoreductase chain 4L (98 aa).

3 helical membrane passes run 1 to 21 (MSLV…GLLM), 29 to 49 (SLLC…LIIL), and 61 to 81 (IILL…LVMV).

Belongs to the complex I subunit 4L family. Core subunit of respiratory chain NADH dehydrogenase (Complex I) which is composed of 45 different subunits.

The protein resides in the mitochondrion inner membrane. The catalysed reaction is a ubiquinone + NADH + 5 H(+)(in) = a ubiquinol + NAD(+) + 4 H(+)(out). In terms of biological role, core subunit of the mitochondrial membrane respiratory chain NADH dehydrogenase (Complex I) which catalyzes electron transfer from NADH through the respiratory chain, using ubiquinone as an electron acceptor. Part of the enzyme membrane arm which is embedded in the lipid bilayer and involved in proton translocation. This chain is NADH-ubiquinone oxidoreductase chain 4L (MT-ND4L), found in Hippopotamus amphibius (Hippopotamus).